The following is a 2620-amino-acid chain: Ankyrin repeat and KH domain-containing protein mask-1 (2620 aa).

12 ANK repeats span residues 254–283 (SKIT…DPNV), 288–318 (NCNT…KKPD), 361–390 (ERDS…KNPP), 402–431 (ERYS…PADL), 437–466 (IEPS…KIEE), 470–502 (KKNT…EVDV), 507–536 (TGDT…DLTA), 538–566 (KTSP…TIPQ), 568–597 (QLSR…DLNF), 600–629 (DERT…SVNF), 634–663 (NDAT…DPML), and 667–697 (DGVN…NMPM). Disordered regions lie at residues 699–726 (KDPP…SGQD), 994–1032 (HQEE…QPGA), and 1192–1229 (SLMA…AIDK). The segment covering 1012 to 1029 (TSLTAPNPADTSDVTTKQ) has biased composition (polar residues). Positions 1192-1206 (SLMAKSVQSQQQQGQ) are enriched in low complexity. The segment covering 1210–1221 (THSEGDGAERAK) has biased composition (basic and acidic residues). 10 ANK repeats span residues 1234-1263 (TLET…NIEH), 1267-1296 (KGFS…AIEA), 1301-1330 (TKDT…NKEH), 1334-1363 (SDYT…EINS), 1369-1398 (LGIS…DINA), 1403-1432 (NRNT…NVEH), 1436-1465 (TGLT…DTNA), 1471-1500 (TKDT…AVDV), 1504-1533 (KGCT…DPDM), and 1537-1566 (RKIS…QFPN). Positions 1596–1648 (AKKAQAESAELAAQKLLELIDEEKVQKEVKKQKQKDKKIKKKEEKKIKKQEAE) form a coiled coil. 2 disordered regions span residues 1621–1720 (QKEV…AEEP) and 1759–1804 (KEGK…EIDT). Positions 1636 to 1647 (KKEEKKIKKQEA) are enriched in basic and acidic residues. Over residues 1648 to 1661 (EPEPEPEPEPEPVP) the composition is skewed to acidic residues. 2 stretches are compositionally biased toward low complexity: residues 1665–1681 (PVVI…IVVE) and 1769–1791 (KSGY…TTSS). Positions 1807-1873 (ESSWKLTIPA…EMVRYAMNII (67 aa)) constitute a KH domain. The segment covering 1899-1913 (ASSFSSEGTSKSAVD) has biased composition (polar residues). Disordered stretches follow at residues 1899-1962 (ASSF…GNVW), 1976-2010 (LMET…QASE), 2067-2143 (SVQS…QTQN), 2267-2294 (NATS…VTTG), 2307-2343 (SFAP…QQQQ), 2372-2391 (QHQS…KFSM), 2429-2448 (QESS…NSYY), and 2496-2620 (QKKQ…SSNW). Over residues 1917 to 1946 (APSSIPKSLSSASIARQSASPIPQQSSQRS) the composition is skewed to low complexity. Residues 1982-1993 (ISQSPKQAPQIP) show a composition bias toward polar residues. Low complexity-rich tracts occupy residues 1994-2006 (STQQ…SRQD), 2067-2078 (SVQSVQHMQQQQ), and 2100-2118 (SQPI…SSFS). 2 stretches are compositionally biased toward polar residues: residues 2267–2286 (NATS…VQQP) and 2325–2339 (RSQS…STNI). Polar residues predominate over residues 2505–2528 (SFMHNSQQPQPFGAPSNASANQSR). Positions 2535-2547 (RPQPPPFVAPQAP) are enriched in pro residues. The segment covering 2552 to 2565 (SLGNASSTTNPSRT) has biased composition (polar residues). Low complexity-rich tracts occupy residues 2566 to 2588 (SMQQ…QMPQ) and 2597 to 2620 (QQQQ…SSNW).

Belongs to the mask family.

It is found in the cytoplasm. This Caenorhabditis elegans protein is Ankyrin repeat and KH domain-containing protein mask-1.